The following is a 131-amino-acid chain: Inactive protein FON2 SPARE1 (131 aa).

Positions 67-131 (SPSSLTTTDR…VPTGPNPLHH (65 aa)) are disordered. A compositionally biased stretch (basic residues) spans 76-97 (RHHHHHRHHGHHHHRGHDRWNR).

This sequence belongs to the CLV3/ESR signal peptide family. In terms of tissue distribution, expressed in all aerial apical meristems, including the floral and inflorescence meristems in the reproductive phase and the shoot apical meristem in the vegetative phase. Also detected in the primordia of lateral organs such as the leaf and the floral organs.

In terms of biological role, non functional suppressor of the fon2 mutation. In Oryza sativa subsp. japonica, the protein has a single amino acid substitution at the putative processing site of the signal peptide while in all the other varieties/species of domesticated and wild rice tested the protein is functional. This Oryza sativa subsp. japonica (Rice) protein is Inactive protein FON2 SPARE1 (FOS1).